Here is a 562-residue protein sequence, read N- to C-terminus: Arginine--tRNA ligase (562 aa).

A 'HIGH' region motif is present at residues 136-146; sequence ANPTGPMHMGN.

Belongs to the class-I aminoacyl-tRNA synthetase family. In terms of assembly, monomer.

It is found in the cytoplasm. The catalysed reaction is tRNA(Arg) + L-arginine + ATP = L-arginyl-tRNA(Arg) + AMP + diphosphate. This is Arginine--tRNA ligase (argS) from Caldanaerobacter subterraneus subsp. tengcongensis (strain DSM 15242 / JCM 11007 / NBRC 100824 / MB4) (Thermoanaerobacter tengcongensis).